The primary structure comprises 292 residues: Bifunctional protein FolD (292 aa).

NADP(+)-binding positions include 166-168, serine 191, and isoleucine 232; that span reads GRS.

This sequence belongs to the tetrahydrofolate dehydrogenase/cyclohydrolase family. Homodimer.

The catalysed reaction is (6R)-5,10-methylene-5,6,7,8-tetrahydrofolate + NADP(+) = (6R)-5,10-methenyltetrahydrofolate + NADPH. The enzyme catalyses (6R)-5,10-methenyltetrahydrofolate + H2O = (6R)-10-formyltetrahydrofolate + H(+). It functions in the pathway one-carbon metabolism; tetrahydrofolate interconversion. Functionally, catalyzes the oxidation of 5,10-methylenetetrahydrofolate to 5,10-methenyltetrahydrofolate and then the hydrolysis of 5,10-methenyltetrahydrofolate to 10-formyltetrahydrofolate. This chain is Bifunctional protein FolD, found in Synechococcus sp. (strain RCC307).